The chain runs to 148 residues: ATP synthase epsilon chain (148 aa).

The protein belongs to the ATPase epsilon chain family. F-type ATPases have 2 components, CF(1) - the catalytic core - and CF(0) - the membrane proton channel. CF(1) has five subunits: alpha(3), beta(3), gamma(1), delta(1), epsilon(1). CF(0) has three main subunits: a, b and c.

The protein resides in the cell membrane. Produces ATP from ADP in the presence of a proton gradient across the membrane. This is ATP synthase epsilon chain from Streptococcus thermophilus (strain ATCC BAA-250 / LMG 18311).